Consider the following 259-residue polypeptide: tRNA pseudouridine synthase A (259 aa).

Asp-50 (nucleophile) is an active-site residue. Tyr-101 is a binding site for substrate.

The protein belongs to the tRNA pseudouridine synthase TruA family.

It catalyses the reaction uridine(38/39/40) in tRNA = pseudouridine(38/39/40) in tRNA. In terms of biological role, formation of pseudouridine at positions 38, 39 and 40 in the anticodon stem and loop of transfer RNAs. This chain is tRNA pseudouridine synthase A, found in Methanocaldococcus jannaschii (strain ATCC 43067 / DSM 2661 / JAL-1 / JCM 10045 / NBRC 100440) (Methanococcus jannaschii).